A 136-amino-acid polypeptide reads, in one-letter code: Histone H3.2 (136 aa).

Positions 1-42 (MARTKQTARKSTGGKAPRKQLATKAARKSAPSAGGVKKPHRY) are disordered. Position 5 is an N6,N6,N6-trimethyllysine; alternate (K5). K5 is subject to N6,N6-dimethyllysine; alternate. K5 and K10 each carry N6-methyllysine; alternate. Position 10 is an N6-acetyllysine; alternate (K10). Phosphoserine is present on S11. An N6,N6-dimethyllysine; alternate modification is found at K15. An N6-acetyllysine; alternate mark is found at K15, K19, K24, K28, and K37. Residues K19, K24, K28, and K37 each carry the N6-methyllysine; alternate modification. 2 positions are modified to N6,N6,N6-trimethyllysine; alternate: K28 and K37. An N6,N6-dimethyllysine; alternate mark is found at K28 and K37. N6-acetyllysine is present on residues K57 and K65. K80 carries the N6,N6,N6-trimethyllysine; alternate modification. Residue K80 is modified to N6,N6-dimethyllysine; alternate. K80 is subject to N6-methyllysine; alternate.

Belongs to the histone H3 family. As to quaternary structure, the nucleosome is a histone octamer containing two molecules each of H2A, H2B, H3 and H4 assembled in one H3-H4 heterotetramer and two H2A-H2B heterodimers. The octamer wraps approximately 147 bp of DNA. Phosphorylated to form H3S10ph. H3S10ph promotes subsequent H3K14ac formation and is required for transcriptional activation through TBP recruitment to the promoters. In terms of processing, mono-, di- and trimethylated by the COMPASS complex to form H3K4me1/2/3. H3K4me activates gene expression by regulating transcription elongation and plays a role in telomere length maintenance. H3K4me enrichment correlates with transcription levels, and occurs in a 5' to 3' gradient with H3K4me3 enrichment at the 5'-end of genes, shifting to H3K4me2 and then H3K4me1. Methylated by SET2 to form H3K36me. H3K36me represses gene expression. Methylated by DOT1 to form H3K79me. H3K79me is required for association of SIR proteins with telomeric regions and for telomeric silencing. The COMPASS-mediated formation of H3K4me2/3 and the DOT1-mediated formation of H3K79me require H2BK123ub1. Post-translationally, acetylation of histone H3 leads to transcriptional activation. H3K14ac formation by GCN5 is promoted by H3S10ph. H3K14ac can also be formed by ESA1. H3K56ac formation occurs predominantly in newly synthesized H3 molecules during G1, S and G2/M of the cell cycle and may be involved in DNA repair.

Its subcellular location is the nucleus. It localises to the chromosome. In terms of biological role, core component of nucleosome. Nucleosomes wrap and compact DNA into chromatin, limiting DNA accessibility to the cellular machineries which require DNA as a template. Histones thereby play a central role in transcription regulation, DNA repair, DNA replication and chromosomal stability. DNA accessibility is regulated via a complex set of post-translational modifications of histones, also called histone code, and nucleosome remodeling. This is Histone H3.2 (HHT2) from Mycosarcoma maydis (Corn smut fungus).